We begin with the raw amino-acid sequence, 212 residues long: Ribonuclease HII (212 aa).

The RNase H type-2 domain occupies 20 to 209 (TCVVGVDEVG…VHNILYQEAS (190 aa)). A divalent metal cation is bound by residues D26, E27, and D117.

This sequence belongs to the RNase HII family. Mn(2+) serves as cofactor. The cofactor is Mg(2+).

Its subcellular location is the cytoplasm. The enzyme catalyses Endonucleolytic cleavage to 5'-phosphomonoester.. Its function is as follows. Endonuclease that specifically degrades the RNA of RNA-DNA hybrids. The chain is Ribonuclease HII from Cereibacter sphaeroides (strain ATCC 17023 / DSM 158 / JCM 6121 / CCUG 31486 / LMG 2827 / NBRC 12203 / NCIMB 8253 / ATH 2.4.1.) (Rhodobacter sphaeroides).